We begin with the raw amino-acid sequence, 277 residues long: Photosystem I assembly factor PSA3, chloroplastic (277 aa).

The N-terminal 45 residues, 1 to 45 (MVVVTHISTSFHQISPSFFHLRLRNPSTTSSSRPKLDGGFALSIR), are a transit peptide targeting the chloroplast.

Interacts with PYG7.

The protein resides in the plastid. Its subcellular location is the chloroplast. The protein localises to the chloroplast thylakoid membrane. Nuclear genome-encoded factor required for the accumulation of photosystem I (PSI). Functions as a PSI biogenesis factor. Cooperates with PYG7 to promote the stable assembly of PSI in the thylakoid membrane. May target primarily the PsaC subunit. Does not seem to be required for the expression of chloroplast genes encoding PSI subunits. In Arabidopsis thaliana (Mouse-ear cress), this protein is Photosystem I assembly factor PSA3, chloroplastic.